Here is a 620-residue protein sequence, read N- to C-terminus: Cryptochrome-1 (620 aa).

Residues 3-132 enclose the Photolyase/cryptochrome alpha/beta domain; sequence VNAVHWFRKG…EVIVRISHTL (130 aa). 3 short sequence motifs (LIR) span residues 50–54, 82–87, and 151–156; these read NRWRF, DVFPRL, and KRFQTL. Position 252 (serine 252) interacts with FAD. 4 short sequence motifs (LIR) span residues 255-260, 271-276, 285-290, and 335-339; these read LRFGCL, DLYKKV, SLYGQL, and TGFPW. An FAD-binding site is contributed by glutamine 289. FAD is bound at residue histidine 355. Residues 379–384 carry the LIR 8 motif; sequence KVFEEL. 387–389 serves as a coordination point for FAD; the sequence is DAD. Short sequence motifs (LIR) lie at residues 395–400, 411–416, 430–435, 486–491, and 492–497; these read GSWMWL, HCYCPV, RRYLPV, QIYQQL, and SRYRGL. Residues 592–620 are disordered; the sequence is GTGISAGKRPNPEEETQSVGPKVQRQSTN.

The protein belongs to the DNA photolyase class-1 family. Component of the circadian core oscillator, which includes the CRY proteins, CLOCK or NPAS2, BMAL1 or BMAL2, CSNK1E, and the PER proteins. FAD is required as a cofactor. (6R)-5,10-methylene-5,6,7,8-tetrahydrofolate serves as cofactor. Expressed in the retina. High levels found in ganglion cells of the retina.

It is found in the cytoplasm. The protein resides in the nucleus. Transcriptional repressor which forms a core component of the circadian clock. The circadian clock, an internal time-keeping system, regulates various physiological processes through the generation of approximately 24 hour circadian rhythms in gene expression, which are translated into rhythms in metabolism and behavior. It is derived from the Latin roots 'circa' (about) and 'diem' (day) and acts as an important regulator of a wide array of physiological functions including metabolism, sleep, body temperature, blood pressure, endocrine, immune, cardiovascular, and renal function. Consists of two major components: the central clock, residing in the suprachiasmatic nucleus (SCN) of the brain, and the peripheral clocks that are present in nearly every tissue and organ system. Both the central and peripheral clocks can be reset by environmental cues, also known as Zeitgebers (German for 'timegivers'). The predominant Zeitgeber for the central clock is light, which is sensed by retina and signals directly to the SCN. The central clock entrains the peripheral clocks through neuronal and hormonal signals, body temperature and feeding-related cues, aligning all clocks with the external light/dark cycle. Circadian rhythms allow an organism to achieve temporal homeostasis with its environment at the molecular level by regulating gene expression to create a peak of protein expression once every 24 hours to control when a particular physiological process is most active with respect to the solar day. Transcription and translation of core clock components (CLOCK, NPAS2, BMAL1, BMAL2, PER1, PER2, PER3, CRY1 and CRY2) plays a critical role in rhythm generation, whereas delays imposed by post-translational modifications (PTMs) are important for determining the period (tau) of the rhythms (tau refers to the period of a rhythm and is the length, in time, of one complete cycle). A diurnal rhythm is synchronized with the day/night cycle, while the ultradian and infradian rhythms have a period shorter and longer than 24 hours, respectively. Disruptions in the circadian rhythms contribute to the pathology of cardiovascular diseases, cancer, metabolic syndromes and aging. A transcription/translation feedback loop (TTFL) forms the core of the molecular circadian clock mechanism. Transcription factors, CLOCK or NPAS2 and BMAL1 or BMAL2, form the positive limb of the feedback loop, act in the form of a heterodimer and activate the transcription of core clock genes and clock-controlled genes (involved in key metabolic processes), harboring E-box elements (5'-CACGTG-3') within their promoters. The core clock genes: PER1/2/3 and CRY1/2 which are transcriptional repressors form the negative limb of the feedback loop and interact with the CLOCK|NPAS2-BMAL1|BMAL2 heterodimer inhibiting its activity and thereby negatively regulating their own expression. This heterodimer also activates nuclear receptors NR1D1, NR1D2, RORA, RORB and RORG, which form a second feedback loop and which activate and repress BMAL1 transcription, respectively. CRY1 and CRY2 have redundant functions but also differential and selective contributions at least in defining the pace of the SCN circadian clock and its circadian transcriptional outputs. More potent transcriptional repressor in cerebellum and liver than CRY2, though more effective in lengthening the period of the SCN oscillator. On its side, CRY2 seems to play a critical role in tuning SCN circadian period by opposing the action of CRY1. With CRY2, is dispensable for circadian rhythm generation but necessary for the development of intercellular networks for rhythm synchrony. Capable of translocating circadian clock core proteins such as PER proteins to the nucleus. Interacts with CLOCK:BMAL1 independently of PER proteins and is found at CLOCK:BMAL1-bound sites, suggesting that CRY may act as a molecular gatekeeper to maintain CLOCK:BMAL1 in a poised and repressed state until the proper time for transcriptional activation. The polypeptide is Cryptochrome-1 (CRY1) (Sylvia borin (Garden warbler)).